We begin with the raw amino-acid sequence, 484 residues long: tRNA-2-methylthio-N(6)-dimethylallyladenosine synthase (484 aa).

The 118-residue stretch at G36 to E153 folds into the MTTase N-terminal domain. [4Fe-4S] cluster contacts are provided by C45, C82, C116, C190, C194, and C197. In terms of domain architecture, Radical SAM core spans R176 to S415. One can recognise a TRAM domain in the interval Q416–L479. The tract at residues E428–F450 is disordered.

The protein belongs to the methylthiotransferase family. MiaB subfamily. In terms of assembly, monomer. [4Fe-4S] cluster serves as cofactor.

The protein resides in the cytoplasm. It catalyses the reaction N(6)-dimethylallyladenosine(37) in tRNA + (sulfur carrier)-SH + AH2 + 2 S-adenosyl-L-methionine = 2-methylsulfanyl-N(6)-dimethylallyladenosine(37) in tRNA + (sulfur carrier)-H + 5'-deoxyadenosine + L-methionine + A + S-adenosyl-L-homocysteine + 2 H(+). Functionally, catalyzes the methylthiolation of N6-(dimethylallyl)adenosine (i(6)A), leading to the formation of 2-methylthio-N6-(dimethylallyl)adenosine (ms(2)i(6)A) at position 37 in tRNAs that read codons beginning with uridine. In Xanthomonas oryzae pv. oryzae (strain PXO99A), this protein is tRNA-2-methylthio-N(6)-dimethylallyladenosine synthase.